A 273-amino-acid chain; its full sequence is Orotidine 5'-phosphate decarboxylase (273 aa).

The active-site Proton donor is the Lys96.

Belongs to the OMP decarboxylase family. Type 2 subfamily.

It catalyses the reaction orotidine 5'-phosphate + H(+) = UMP + CO2. It functions in the pathway pyrimidine metabolism; UMP biosynthesis via de novo pathway; UMP from orotate: step 2/2. This chain is Orotidine 5'-phosphate decarboxylase, found in Flavobacterium johnsoniae (strain ATCC 17061 / DSM 2064 / JCM 8514 / BCRC 14874 / CCUG 350202 / NBRC 14942 / NCIMB 11054 / UW101) (Cytophaga johnsonae).